The following is a 274-amino-acid chain: Shikimate dehydrogenase (NADP(+)) (274 aa).

Shikimate-binding positions include 14–16 (SKS) and threonine 60. Lysine 64 acts as the Proton acceptor in catalysis. Glutamate 76 provides a ligand contact to NADP(+). Shikimate-binding residues include asparagine 85 and aspartate 101. Residues 126-130 (GAGGA), 150-155 (NRTARK), and methionine 214 each bind NADP(+). Tyrosine 216 contacts shikimate. Glycine 238 provides a ligand contact to NADP(+).

It belongs to the shikimate dehydrogenase family. Homodimer.

It catalyses the reaction shikimate + NADP(+) = 3-dehydroshikimate + NADPH + H(+). It participates in metabolic intermediate biosynthesis; chorismate biosynthesis; chorismate from D-erythrose 4-phosphate and phosphoenolpyruvate: step 4/7. In terms of biological role, involved in the biosynthesis of the chorismate, which leads to the biosynthesis of aromatic amino acids. Catalyzes the reversible NADPH linked reduction of 3-dehydroshikimate (DHSA) to yield shikimate (SA). The polypeptide is Shikimate dehydrogenase (NADP(+)) (Pseudomonas aeruginosa (strain ATCC 15692 / DSM 22644 / CIP 104116 / JCM 14847 / LMG 12228 / 1C / PRS 101 / PAO1)).